Here is a 388-residue protein sequence, read N- to C-terminus: Purple acid phosphatase 19 (388 aa).

The signal sequence occupies residues 1–24 (MGLNHLTLVCSAIALLSIFVVSQA). N-linked (GlcNAc...) asparagine glycans are attached at residues Asn97 and Asn111. Positions 145 and 148 each coordinate Fe cation. Asp145 contacts Zn(2+). Asn182 is a binding site for Zn(2+). Asn182 is a substrate binding site. N-linked (GlcNAc...) asparagine glycosylation is present at Asn226. His238 serves as a coordination point for Zn(2+). The active-site Proton donor is the His248. Residue His275 participates in Zn(2+) binding. Residue 275–277 (HVH) participates in substrate binding. His277 contributes to the Fe cation binding site. Residues Asn291 and Asn348 are each glycosylated (N-linked (GlcNAc...) asparagine).

It belongs to the metallophosphoesterase superfamily. Purple acid phosphatase family. In terms of assembly, homodimer. Fe cation is required as a cofactor. It depends on Zn(2+) as a cofactor. Specifically expressed in flowers.

It is found in the secreted. The enzyme catalyses a phosphate monoester + H2O = an alcohol + phosphate. This Arabidopsis thaliana (Mouse-ear cress) protein is Purple acid phosphatase 19 (PAP19).